Consider the following 115-residue polypeptide: NADH-ubiquinone oxidoreductase chain 3 (115 aa).

Helical transmembrane passes span L4–L24, F55–L75, and T87–L107.

This sequence belongs to the complex I subunit 3 family. Core subunit of respiratory chain NADH dehydrogenase (Complex I) which is composed of 45 different subunits. Interacts with TMEM186. Interacts with TMEM242.

Its subcellular location is the mitochondrion inner membrane. The enzyme catalyses a ubiquinone + NADH + 5 H(+)(in) = a ubiquinol + NAD(+) + 4 H(+)(out). Core subunit of the mitochondrial membrane respiratory chain NADH dehydrogenase (Complex I) which catalyzes electron transfer from NADH through the respiratory chain, using ubiquinone as an electron acceptor. Essential for the catalytic activity of complex I. In Notiomys edwardsii (Edwards's long-clawed mouse), this protein is NADH-ubiquinone oxidoreductase chain 3.